The sequence spans 709 residues: Solute carrier family 15 member 1 (709 aa).

A helical membrane pass occupies residues 1–21 (MGMSKSRGCFGYPLSIFFIVV). At 22–53 (NEFCERFSYYGMRALLVLYFRNFLGWDDNLST) the chain is on the extracellular side. Asn-50 is a glycosylation site (N-linked (GlcNAc...) asparagine). Residues 54–74 (AIYHTFVALCYLTPILGALIA) form a helical membrane-spanning segment. The Cytoplasmic segment spans residues 75–82 (DSWLGKFK). The helical transmembrane segment at 83-103 (TIVSLSIVYTIGQAVISVSSI) threads the bilayer. Over 104–118 (NDLTDHDHNGSPDSL) the chain is Extracellular. A helical membrane pass occupies residues 119 to 139 (PVHVALSMVGLALIALGTGGI). Over 140–161 (KPCVSAFGGDQFEEGQEKQRNR) the chain is Cytoplasmic. Residues 162–182 (FFSIFYLAINGGSLLSTIITP) form a helical membrane-spanning segment. Topologically, residues 183–198 (ILRVQQCGIHSQQACY) are extracellular. The chain crosses the membrane as a helical span at residues 199–219 (PLAFGVPAALMAVALIVFVLG). Over 220 to 276 (SGMYKKFQPQGNIMGKVAKCIGFAIKNRFRHRSKAYPKREHWLDWAKEKYDERLISQ) the chain is Cytoplasmic. The chain crosses the membrane as a helical span at residues 277–297 (IKMVTKVMFLYIPLPMFWALF). Topologically, residues 298–327 (DQQGSRWTLQATTMNGKIGAIEIQPDQMQT) are extracellular. Residues 328 to 348 (VNAILIVIMVPIVDAVVYPLI) form a helical membrane-spanning segment. The Cytoplasmic portion of the chain corresponds to 349–361 (AKCGFNFTSLKKM). Residues 362–382 (TVGMFLASMAFVVAAIVQVEI) form a helical membrane-spanning segment. Topologically, residues 383–585 (DKTLPVFPGG…PPNTVNMALQ (203 aa)) are extracellular. The segment at 383 to 585 (DKTLPVFPGG…PPNTVNMALQ (203 aa)) is extracellular domain (ECD). 4 N-linked (GlcNAc...) asparagine glycosylation sites follow: Asn-406, Asn-439, Asn-515, and Asn-532. A helical membrane pass occupies residues 586–606 (IPQYFLLTCGEVVFSVTGLEF). At 607-620 (SYSQAPSNMKSVLQ) the chain is on the cytoplasmic side. The chain crosses the membrane as a helical span at residues 621–641 (AGWLLTVAVGNIIVLIVAGAG). Topologically, residues 642–646 (HFPKQ) are extracellular. A helical transmembrane segment spans residues 647 to 667 (WAEYILFASLLLVVCVIFAIM). The Cytoplasmic portion of the chain corresponds to 668–709 (ARFYTYINPAEIEAQFDEDEKKKGIGKENPYSSLEPVSQTNM). The tract at residues 690-709 (KGIGKENPYSSLEPVSQTNM) is disordered. Residues 697-709 (PYSSLEPVSQTNM) show a composition bias toward polar residues.

It belongs to the major facilitator superfamily. Proton-dependent oligopeptide transporter (POT/PTR) (TC 2.A.17) family. In terms of assembly, interacts (via extracellular domain region) with trypsin.

It is found in the apical cell membrane. It carries out the reaction a dipeptide(out) + H(+)(out) = a dipeptide(in) + H(+)(in). The enzyme catalyses an L-amino acid tripeptide(out) + H(+)(out) = an L-amino acid tripeptide(in) + H(+)(in). It catalyses the reaction L-alanyl-L-lysine(out) + H(+)(out) = L-alanyl-L-lysine(in) + H(+)(in). The catalysed reaction is L-alanyl-L-proline(out) + H(+)(out) = L-alanyl-L-proline(in) + H(+)(in). It carries out the reaction L-alanyl-L-valine(out) + H(+)(out) = L-alanyl-L-valine(in) + H(+)(in). The enzyme catalyses carnosine(out) + H(+)(out) = carnosine(in) + H(+)(in). It catalyses the reaction glycyl-L-glutamine(out) + H(+)(out) = glycyl-L-glutamine(in) + H(+)(in). The catalysed reaction is glycyl-L-leucine(out) + H(+)(out) = glycyl-L-leucine(in) + H(+)(in). It carries out the reaction glycyl-L-proline(out) + H(+)(out) = glycyl-L-proline(in) + H(+)(in). The enzyme catalyses glycyl-sarcosine(out) + H(+)(out) = glycyl-sarcosine(in) + H(+)(in). It catalyses the reaction L-leucyl-L-leucine(out) + H(+)(out) = L-leucyl-L-leucine(in) + H(+)(in). The catalysed reaction is L-leucyl-L-proline(out) + H(+)(out) = L-leucyl-L-proline(in) + H(+)(in). It carries out the reaction L-phenylalanyl-L-leucine(out) + H(+)(out) = L-phenylalanyl-L-leucine(in) + H(+)(in). The enzyme catalyses L-phenylalanyl-L-phenylalanine(out) + H(+)(out) = L-phenylalanyl-L-phenylalanine(in) + H(+)(in). It catalyses the reaction L-lysyl-glycine(out) + H(+)(out) = L-lysyl-glycine(in) + H(+)(in). The catalysed reaction is L-tyrosylglycine(out) + H(+)(out) = L-tyrosylglycine(in) + H(+)(in). It carries out the reaction L-alanyl-L-aspartate(out) + 2 H(+)(out) = L-alanyl-L-aspartate(in) + 2 H(+)(in). The enzyme catalyses L-aspartyl-glycine(out) + 2 H(+)(out) = L-aspartyl-glycine(in) + 2 H(+)(in). It catalyses the reaction glycyl-L-aspartate(out) + 2 H(+)(out) = glycyl-L-aspartate(in) + 2 H(+)(in). The catalysed reaction is glycyl-L-glutamate(out) + 2 H(+)(out) = glycyl-L-glutamate(in) + 2 H(+)(in). It carries out the reaction L-alanyl-L-leucyl-L-alanine(out) + H(+)(out) = L-alanyl-L-leucyl-L-alanine(in) + H(+)(in). The enzyme catalyses L-alanyl-L-prolylglycine(out) + H(+)(out) = L-alanyl-L-prolylglycine(in) + H(+)(in). It catalyses the reaction glycylglycyl-L-isoleucine(out) + H(+)(out) = glycylglycyl-L-isoleucine(in) + H(+)(in). The catalysed reaction is glycylglycyl-L-proline(out) + H(+)(out) = glycylglycyl-L-proline(in) + H(+)(in). It carries out the reaction L-methionyl-L-phenylalanyl-L-methionine(out) + H(+)(out) = L-methionyl-L-phenylalanyl-L-methionine(in) + H(+)(in). The enzyme catalyses N-acetyl-D-muramoyl-L-alanyl-D-isoglutamine(out) + 2 H(+)(out) = N-acetyl-D-muramoyl-L-alanyl-D-isoglutamine(in) + 2 H(+)(in). It catalyses the reaction N(alpha)-formyl-L-methionyl-L-leucyl-L-phenylalanine(out) + 2 H(+)(out) = N(alpha)-formyl-L-methionyl-L-leucyl-L-phenylalanine(in) + 2 H(+)(in). Electrogenic proton-coupled amino-acid transporter that transports oligopeptides of 2 to 4 amino acids with a preference for dipeptides. Transports neutral and monovalently charged peptides with a proton to peptide stoichiometry of 1:1 or 2:1. Primarily responsible for the absorption of dietary di- and tripeptides from the small intestinal lumen. Mediates transepithelial transport of muramyl and N-formylated bacterial dipeptides contributing to recognition of pathogenic bacteria by the mucosal immune system. The polypeptide is Solute carrier family 15 member 1 (Mus musculus (Mouse)).